Here is a 1940-residue protein sequence, read N- to C-terminus: Myosin-3 (1940 aa).

In terms of domain architecture, Myosin N-terminal SH3-like spans 33–82 (DAKTYCFVVDSKEEYAKGKIKSSQDGKVTVETEDNRTLVVKPEDVYAMNP). The Myosin motor domain occupies 86–779 (DRIEDMAMLT…LLGTLEEMRD (694 aa)). Residue Lys-130 is modified to N6,N6,N6-trimethyllysine. 179–186 (GESGAGKT) serves as a coordination point for ATP. Actin-binding stretches follow at residues 656–678 (LNKL…IPNE) and 758–772 (KFGH…GLLG). Residues 782-811 (LAKLITRTQAVCRGFLMRVEFQKMVQRRES) enclose the IQ domain. Positions 840–1933 (LLKSAETEKE…KTRDFTSSRM (1094 aa)) form a coiled coil.

Belongs to the TRAFAC class myosin-kinesin ATPase superfamily. Myosin family. In terms of assembly, muscle myosin is a hexameric protein that consists of 2 heavy chain subunits (MHC), 2 alkali light chain subunits (MLC) and 2 regulatory light chain subunits (MLC-2). As to expression, expressed in fetal bone, thymus, placenta, heart, brain, and liver.

It localises to the cytoplasm. The protein localises to the myofibril. Functionally, muscle contraction. In Homo sapiens (Human), this protein is Myosin-3 (MYH3).